A 328-amino-acid polypeptide reads, in one-letter code: MPNYINYPSWLHPEVIQGIPITWYSLSYILIILISYKFIWYQIQSDNVDIKKEDYEIFMFSLVLGAILGGRLASTLVYDKSGIYYSNPWLILLPFDQHWNFTGFRGMAIHGGFLGAIIAPLITINTKLKNTNVQKYFLKLTDYGSIAFSSGYILGRLANFANAELYGRVMKGGIIFPNAEPFDTNIPGVKEFASSVGLEISPHDLLINLPRIPSQLIEGFFEGPVTFLLLWFLFKKIKKYDGFIFGVYVMLYAFFRFFIEYLREPDKELGFIITYKPITSLSEFSFLNISMGQILSLTLMLSGLIWIIVTKKIADKKIKNNTNLAYKN.

Helical transmembrane passes span 15–35, 57–77, and 106–126; these read VIQGIPITWYSLSYILIILIS, IFMFSLVLGAILGGRLASTLV, and GMAIHGGFLGAIIAPLITINT. Arg-156 contributes to the a 1,2-diacyl-sn-glycero-3-phospho-(1'-sn-glycerol) binding site. A run of 2 helical transmembrane segments spans residues 242 to 262 and 289 to 309; these read GFIFGVYVMLYAFFRFFIEYL and ISMGQILSLTLMLSGLIWIIV.

It belongs to the Lgt family.

The protein resides in the cell inner membrane. The enzyme catalyses L-cysteinyl-[prolipoprotein] + a 1,2-diacyl-sn-glycero-3-phospho-(1'-sn-glycerol) = an S-1,2-diacyl-sn-glyceryl-L-cysteinyl-[prolipoprotein] + sn-glycerol 1-phosphate + H(+). It participates in protein modification; lipoprotein biosynthesis (diacylglyceryl transfer). Functionally, catalyzes the transfer of the diacylglyceryl group from phosphatidylglycerol to the sulfhydryl group of the N-terminal cysteine of a prolipoprotein, the first step in the formation of mature lipoproteins. The polypeptide is Phosphatidylglycerol--prolipoprotein diacylglyceryl transferase (Borreliella burgdorferi (strain ZS7) (Borrelia burgdorferi)).